The chain runs to 314 residues: Thymidylate synthase (314 aa).

DUMP-binding positions include R21 and 176–177 (RR). The active-site Nucleophile is C196. Residues 216-219 (RSAD), N227, and 257-259 (HLY) contribute to the dUMP site. D219 is a binding site for (6R)-5,10-methylene-5,6,7,8-tetrahydrofolate. (6R)-5,10-methylene-5,6,7,8-tetrahydrofolate is bound at residue S313.

This sequence belongs to the thymidylate synthase family. Bacterial-type ThyA subfamily. In terms of assembly, homodimer.

The protein localises to the cytoplasm. It catalyses the reaction dUMP + (6R)-5,10-methylene-5,6,7,8-tetrahydrofolate = 7,8-dihydrofolate + dTMP. It participates in pyrimidine metabolism; dTTP biosynthesis. In terms of biological role, catalyzes the reductive methylation of 2'-deoxyuridine-5'-monophosphate (dUMP) to 2'-deoxythymidine-5'-monophosphate (dTMP) while utilizing 5,10-methylenetetrahydrofolate (mTHF) as the methyl donor and reductant in the reaction, yielding dihydrofolate (DHF) as a by-product. This enzymatic reaction provides an intracellular de novo source of dTMP, an essential precursor for DNA biosynthesis. The protein is Thymidylate synthase of Listeria monocytogenes serovar 1/2a (strain ATCC BAA-679 / EGD-e).